A 207-amino-acid polypeptide reads, in one-letter code: Large ribosomal subunit protein bL17m (207 aa).

Positions 173–200 (EKESEHARLKEDHEDEKTVKKDWKRGDP) are enriched in basic and acidic residues. Positions 173–207 (EKESEHARLKEDHEDEKTVKKDWKRGDPIPRPTYI) are disordered.

Belongs to the bacterial ribosomal protein bL17 family. Component of the mitochondrial large ribosomal subunit (mt-LSU). Mature yeast 74S mitochondrial ribosomes consist of a small (37S) and a large (54S) subunit. The 37S small subunit contains a 15S ribosomal RNA (15S mt-rRNA) and at least 32 different proteins. The 54S large subunit contains a 21S rRNA (21S mt-rRNA) and at least 45 different proteins.

It is found in the mitochondrion. In terms of biological role, component of the mitochondrial ribosome (mitoribosome), a dedicated translation machinery responsible for the synthesis of mitochondrial genome-encoded proteins, including at least some of the essential transmembrane subunits of the mitochondrial respiratory chain. The mitoribosomes are attached to the mitochondrial inner membrane and translation products are cotranslationally integrated into the membrane. The protein is Large ribosomal subunit protein bL17m (mrpl8) of Schizosaccharomyces pombe (strain 972 / ATCC 24843) (Fission yeast).